The sequence spans 422 residues: 5'-deoxyadenosine deaminase (422 aa).

His-57 and His-59 together coordinate Zn(2+). Positions 86 and 178 each coordinate substrate. His-205 provides a ligand contact to Zn(2+). Positions 208 and 294 each coordinate substrate. Asp-294 contacts Zn(2+).

The protein belongs to the metallo-dependent hydrolases superfamily. MTA/SAH deaminase family. As to quaternary structure, homotetramer. Zn(2+) serves as cofactor.

It carries out the reaction 5'-deoxyadenosine + H2O + H(+) = 5'-deoxyinosine + NH4(+). The catalysed reaction is S-adenosyl-L-homocysteine + H2O + H(+) = S-inosyl-L-homocysteine + NH4(+). The enzyme catalyses S-methyl-5'-thioadenosine + H2O + H(+) = S-methyl-5'-thioinosine + NH4(+). It catalyses the reaction adenosine + H2O + H(+) = inosine + NH4(+). Its pathway is amino-acid biosynthesis; S-adenosyl-L-methionine biosynthesis. Catalyzes the deamination of three SAM-derived enzymatic products, namely 5'-deoxyadenosine, S-adenosyl-L-homocysteine, and 5'-methylthioadenosine, to produce the inosine analogs. Can also deaminate adenosine. The preferred substrate for this enzyme is 5'-deoxyadenosine, but all these substrates are efficiently deaminated. Likely functions in a S-adenosyl-L-methionine (SAM) recycling pathway from S-adenosyl-L-homocysteine (SAH) produced from SAM-dependent methylation reactions. May also be involved in the recycling of 5'-deoxyadenosine, whereupon the 5'-deoxyribose moiety of 5'-deoxyinosine is further metabolized to deoxyhexoses used for the biosynthesis of aromatic amino acids in methanogens. This is 5'-deoxyadenosine deaminase from Methanococcus maripaludis (strain C7 / ATCC BAA-1331).